The chain runs to 244 residues: Cell division protein ZipA (244 aa).

Over 1–4 (MSDM) the chain is Periplasmic. A helical membrane pass occupies residues 5-25 (AMIRIGILIAGLLLVAAIFLF). At 26–244 (GRPKKSPQGR…APPLTKSPRW (219 aa)) the chain is on the cytoplasmic side. Positions 30 to 91 (KSPQGRRVDK…GAGGNDVGKR (62 aa)) are disordered. A compositionally biased stretch (basic and acidic residues) spans 35 to 50 (RRVDKDDTQPRERREP).

Belongs to the ZipA family. As to quaternary structure, interacts with FtsZ via their C-terminal domains.

It is found in the cell inner membrane. Its function is as follows. Essential cell division protein that stabilizes the FtsZ protofilaments by cross-linking them and that serves as a cytoplasmic membrane anchor for the Z ring. Also required for the recruitment to the septal ring of downstream cell division proteins. In Xanthomonas campestris pv. campestris (strain ATCC 33913 / DSM 3586 / NCPPB 528 / LMG 568 / P 25), this protein is Cell division protein ZipA.